A 347-amino-acid chain; its full sequence is tRNA N6-adenosine threonylcarbamoyltransferase (347 aa).

2 residues coordinate Fe cation: histidine 117 and histidine 121. Residues 140–144, aspartate 174, glycine 187, aspartate 191, and asparagine 281 contribute to the substrate site; that span reads LVSGG. Aspartate 309 is a Fe cation binding site.

The protein belongs to the KAE1 / TsaD family. Fe(2+) serves as cofactor.

It is found in the cytoplasm. The catalysed reaction is L-threonylcarbamoyladenylate + adenosine(37) in tRNA = N(6)-L-threonylcarbamoyladenosine(37) in tRNA + AMP + H(+). Functionally, required for the formation of a threonylcarbamoyl group on adenosine at position 37 (t(6)A37) in tRNAs that read codons beginning with adenine. Is involved in the transfer of the threonylcarbamoyl moiety of threonylcarbamoyl-AMP (TC-AMP) to the N6 group of A37, together with TsaE and TsaB. TsaD likely plays a direct catalytic role in this reaction. The chain is tRNA N6-adenosine threonylcarbamoyltransferase from Thermobifida fusca (strain YX).